The following is a 420-amino-acid chain: Dynein axonemal assembly factor 4 (420 aa).

The CS domain maps to 3–87; that stretch reads LQVSDYSWQQ…KEAAMWETLS (85 aa). Residues 7–103 are mediates interaction with ESR1 and STUB1; that stretch reads DYSWQQTKTA…EMMQRIREKS (97 aa). TPR repeat units follow at residues 290–323, 324–357, and 366–399; these read PEWL…NNKM, PLLY…LMPP, and MKAH…DPSN.

Interacts with ZMYND10. Interacts with STUB1. Interacts with ESR1 and ESR2. Interacts with DNAAF2. Interacts with CCT3, CCT4, CCT5 and CCT8. Interacts with DNAAF6/PIH1D3.

The protein localises to the nucleus. It localises to the cytoplasm. Its subcellular location is the cell projection. It is found in the neuron projection. The protein resides in the dynein axonemal particle. Involved in neuronal migration during development of the cerebral neocortex. May regulate the stability and proteasomal degradation of the estrogen receptors that play an important role in neuronal differentiation, survival and plasticity. Axonemal dynein assembly factor required for ciliary motility. The polypeptide is Dynein axonemal assembly factor 4 (Pan paniscus (Pygmy chimpanzee)).